Reading from the N-terminus, the 152-residue chain is Transcriptional regulator MraZ (152 aa).

SpoVT-AbrB domains follow at residues 5 to 51 and 80 to 123; these read VNSI…PLPE and AAEC…DEVL.

The protein belongs to the MraZ family. Forms oligomers.

Its subcellular location is the cytoplasm. It is found in the nucleoid. This Methylococcus capsulatus (strain ATCC 33009 / NCIMB 11132 / Bath) protein is Transcriptional regulator MraZ.